The primary structure comprises 714 residues: Fatty acid oxidation complex subunit alpha (714 aa).

Residues 1–190 (MEMTSAFTLN…KLGLVDDVVP (190 aa)) are enoyl-CoA hydratase. The 3-hydroxyacyl-CoA dehydrogenase stretch occupies residues 306-714 (APLNSVGILG…FWKTTATDLQ (409 aa)).

This sequence in the N-terminal section; belongs to the enoyl-CoA hydratase/isomerase family. It in the central section; belongs to the 3-hydroxyacyl-CoA dehydrogenase family. In terms of assembly, heterotetramer of two alpha chains (FadJ) and two beta chains (FadI).

The protein resides in the cytoplasm. It carries out the reaction a (3S)-3-hydroxyacyl-CoA = a (2E)-enoyl-CoA + H2O. The enzyme catalyses a 4-saturated-(3S)-3-hydroxyacyl-CoA = a (3E)-enoyl-CoA + H2O. The catalysed reaction is a (3S)-3-hydroxyacyl-CoA + NAD(+) = a 3-oxoacyl-CoA + NADH + H(+). It catalyses the reaction (3S)-3-hydroxybutanoyl-CoA = (3R)-3-hydroxybutanoyl-CoA. It participates in lipid metabolism; fatty acid beta-oxidation. In terms of biological role, catalyzes the formation of a hydroxyacyl-CoA by addition of water on enoyl-CoA. Also exhibits 3-hydroxyacyl-CoA epimerase and 3-hydroxyacyl-CoA dehydrogenase activities. Strongly involved in the anaerobic degradation of long and medium-chain fatty acids in the presence of nitrate and weakly involved in the aerobic degradation of long-chain fatty acids. This chain is Fatty acid oxidation complex subunit alpha (fadJ), found in Escherichia coli (strain K12).